A 320-amino-acid polypeptide reads, in one-letter code: o-succinylbenzoate synthase (320 aa).

Lysine 133 serves as the catalytic Proton donor. 3 residues coordinate Mg(2+): aspartate 161, glutamate 190, and aspartate 213. Lysine 235 functions as the Proton acceptor in the catalytic mechanism.

The protein belongs to the mandelate racemase/muconate lactonizing enzyme family. MenC type 1 subfamily. A divalent metal cation is required as a cofactor.

The enzyme catalyses (1R,6R)-6-hydroxy-2-succinyl-cyclohexa-2,4-diene-1-carboxylate = 2-succinylbenzoate + H2O. It participates in quinol/quinone metabolism; 1,4-dihydroxy-2-naphthoate biosynthesis; 1,4-dihydroxy-2-naphthoate from chorismate: step 4/7. The protein operates within quinol/quinone metabolism; menaquinone biosynthesis. Converts 2-succinyl-6-hydroxy-2,4-cyclohexadiene-1-carboxylate (SHCHC) to 2-succinylbenzoate (OSB). This is o-succinylbenzoate synthase from Salmonella paratyphi A (strain ATCC 9150 / SARB42).